Consider the following 236-residue polypeptide: 2-C-methyl-D-erythritol 4-phosphate cytidylyltransferase (236 aa).

It belongs to the IspD/TarI cytidylyltransferase family. IspD subfamily. Homodimer.

It catalyses the reaction 2-C-methyl-D-erythritol 4-phosphate + CTP + H(+) = 4-CDP-2-C-methyl-D-erythritol + diphosphate. It functions in the pathway isoprenoid biosynthesis; isopentenyl diphosphate biosynthesis via DXP pathway; isopentenyl diphosphate from 1-deoxy-D-xylulose 5-phosphate: step 2/6. Functionally, catalyzes the formation of 4-diphosphocytidyl-2-C-methyl-D-erythritol from CTP and 2-C-methyl-D-erythritol 4-phosphate (MEP). This is 2-C-methyl-D-erythritol 4-phosphate cytidylyltransferase from Escherichia coli O139:H28 (strain E24377A / ETEC).